The sequence spans 134 residues: Transmembrane protein 100 (134 aa).

The interval 1–23 (MTEESTKENLGAPKSPTPVTMEK) is disordered. Ser-15 carries the post-translational modification Phosphoserine. 2 consecutive transmembrane segments (helical) span residues 56-76 (CIIPFAVVVFITGIVVTAVAY) and 84-104 (IISIFGLVLLSSGLFLLASSA). Ser-121 bears the Phosphoserine mark.

As to quaternary structure, interacts (via C-terminus) with TRPA1 and TRPV1. Interacts with TASOR. In terms of tissue distribution, expressed in dorsal root ganglia. Expressed in neurons as well as nerve fiber bundles connecting ganglia and fibers innervating muscle layer of the gastric body, jejunum, and proximal colon. Expressed in arterial endothelial cells and neurons of the central nervous system and peripheral nervous system (at protein level). Expressed strongly in lung, weakly in brain, heart and muscle. Expressed in enteric neurons and vascular tissue in the muscularis propria of the gastrointestinal tract.

It localises to the cell membrane. The protein localises to the membrane. The protein resides in the perikaryon. It is found in the cytoplasm. Its subcellular location is the perinuclear region. It localises to the endoplasmic reticulum. Its function is as follows. Plays a role during embryonic arterial endothelium differentiation and vascular morphogenesis through the ACVRL1 receptor-dependent signaling pathway upon stimulation by bone morphogenetic proteins, such as GDF2/BMP9 and BMP10. Involved in the regulation of nociception, acting as a modulator of the interaction between TRPA1 and TRPV1, two molecular sensors and mediators of pain signals in dorsal root ganglia (DRG) neurons. Mechanistically, it weakens their interaction, thereby releasing the inhibition of TRPA1 by TRPV1 and increasing the single-channel open probability of the TRPA1-TRPV1 complex. This Mus musculus (Mouse) protein is Transmembrane protein 100 (Tmem100).